Here is a 391-residue protein sequence, read N- to C-terminus: Rhizopuspepsin-2 (391 aa).

The signal sequence occupies residues Met1–Ala21. The propeptide at Ala22–Glu68 is activation peptide. The 305-residue stretch at Tyr84–Ala388 folds into the Peptidase A1 domain. Asp102 is a catalytic residue. Cysteines 115 and 118 form a disulfide. Residue Asp285 is part of the active site. Cys319 and Cys352 are joined by a disulfide.

The protein belongs to the peptidase A1 family.

It carries out the reaction Hydrolysis of proteins with broad specificity similar to that of pepsin A, preferring hydrophobic residues at P1 and P1'. Clots milk and activates trypsinogen. Does not cleave 4-Gln-|-His-5, but does cleave 10-His-|-Leu-11 and 12-Val-|-Glu-13 in B chain of insulin.. This is Rhizopuspepsin-2 from Rhizopus niveus.